Consider the following 305-residue polypeptide: Outer membrane protein assembly factor BamD (305 aa).

An N-terminal signal peptide occupies residues 1–24; the sequence is MLRIFQGRPAVTIAAVLVAASVAG. The N-palmitoyl cysteine moiety is linked to residue C25. Residue C25 is the site of S-diacylglycerol cysteine attachment. 4 TPR repeats span residues 41-74, 78-111, 113-136, and 174-207; these read VELLYSTGADRLDRGNWNEAVDYFREVERQHPYS, RRSILMTGYAHYMGNQYAEAIGDADRFISLYPGN, SAQYAFYLKAICYFEQIVDVNRDQ, and AGKEMAIGRWYLKNGQTLAAIGRFKAVIERHQTT.

Belongs to the BamD family. Part of the Bam complex.

It localises to the cell outer membrane. In terms of biological role, part of the outer membrane protein assembly complex, which is involved in assembly and insertion of beta-barrel proteins into the outer membrane. In Caulobacter vibrioides (strain ATCC 19089 / CIP 103742 / CB 15) (Caulobacter crescentus), this protein is Outer membrane protein assembly factor BamD.